Consider the following 148-residue polypeptide: Hemoglobin subunit alpha (148 aa).

The residue at position 1 (S1) is an N-acetylserine. The region spanning 8–148 is the Globin domain; the sequence is DYSAADRAEL…VCHELSSRYR (141 aa). An O2-binding site is contributed by H66. H95 is a heme b binding site.

Belongs to the globin family. Heterotetramer of two alpha chains and two beta chains. In terms of tissue distribution, red blood cells.

In terms of biological role, involved in oxygen transport from the lung to the various peripheral tissues. This is Hemoglobin subunit alpha (HBA) from Heterodontus portusjacksoni (Port Jackson shark).